The chain runs to 494 residues: Protein nucleotidyltransferase YdiU (494 aa).

ATP-binding residues include Gly101, Gly103, Arg104, Lys123, Asp135, Gly136, Arg186, and Arg193. The active-site Proton acceptor is the Asp262. Mg(2+)-binding residues include Asn263 and Asp272. Asp272 contributes to the ATP binding site.

This sequence belongs to the SELO family. Mg(2+) serves as cofactor. Requires Mn(2+) as cofactor.

The enzyme catalyses L-seryl-[protein] + ATP = 3-O-(5'-adenylyl)-L-seryl-[protein] + diphosphate. The catalysed reaction is L-threonyl-[protein] + ATP = 3-O-(5'-adenylyl)-L-threonyl-[protein] + diphosphate. It catalyses the reaction L-tyrosyl-[protein] + ATP = O-(5'-adenylyl)-L-tyrosyl-[protein] + diphosphate. It carries out the reaction L-histidyl-[protein] + UTP = N(tele)-(5'-uridylyl)-L-histidyl-[protein] + diphosphate. The enzyme catalyses L-seryl-[protein] + UTP = O-(5'-uridylyl)-L-seryl-[protein] + diphosphate. The catalysed reaction is L-tyrosyl-[protein] + UTP = O-(5'-uridylyl)-L-tyrosyl-[protein] + diphosphate. Nucleotidyltransferase involved in the post-translational modification of proteins. It can catalyze the addition of adenosine monophosphate (AMP) or uridine monophosphate (UMP) to a protein, resulting in modifications known as AMPylation and UMPylation. This Chromohalobacter salexigens (strain ATCC BAA-138 / DSM 3043 / CIP 106854 / NCIMB 13768 / 1H11) protein is Protein nucleotidyltransferase YdiU.